Reading from the N-terminus, the 492-residue chain is Glutamyl-tRNA(Gln) amidotransferase subunit A (492 aa).

Active-site charge relay system residues include K78 and S158. S182 functions as the Acyl-ester intermediate in the catalytic mechanism.

Belongs to the amidase family. GatA subfamily. In terms of assembly, heterotrimer of A, B and C subunits.

It carries out the reaction L-glutamyl-tRNA(Gln) + L-glutamine + ATP + H2O = L-glutaminyl-tRNA(Gln) + L-glutamate + ADP + phosphate + H(+). Its function is as follows. Allows the formation of correctly charged Gln-tRNA(Gln) through the transamidation of misacylated Glu-tRNA(Gln) in organisms which lack glutaminyl-tRNA synthetase. The reaction takes place in the presence of glutamine and ATP through an activated gamma-phospho-Glu-tRNA(Gln). The polypeptide is Glutamyl-tRNA(Gln) amidotransferase subunit A (Orientia tsutsugamushi (strain Boryong) (Rickettsia tsutsugamushi)).